A 375-amino-acid polypeptide reads, in one-letter code: Peptide-N(4)-(N-acetyl-beta-glucosaminyl)asparagine amidase (375 aa).

Positions 129, 132, 163, and 166 each coordinate Zn(2+). Cys189 serves as the catalytic Nucleophile. Active-site residues include His219 and Asp236. Glu239 serves as a coordination point for substrate. The segment at Lys345–Glu375 is disordered. Residues Glu364–Glu375 show a composition bias toward basic and acidic residues.

The protein belongs to the transglutaminase-like superfamily. PNGase family. The cofactor is Zn(2+).

Its subcellular location is the cytoplasm. The catalysed reaction is Hydrolysis of an N(4)-(acetyl-beta-D-glucosaminyl)asparagine residue in which the glucosamine residue may be further glycosylated, to yield a (substituted) N-acetyl-beta-D-glucosaminylamine and a peptide containing an aspartate residue.. Functionally, specifically deglycosylates the denatured form of N-linked glycoproteins in the cytoplasm and assists their proteasome-mediated degradation. Cleaves the beta-aspartyl-glucosamine (GlcNAc) of the glycan and the amide side chain of Asn, converting Asn to Asp. Prefers proteins containing high-mannose over those bearing complex type oligosaccharides. Can recognize misfolded proteins in the endoplasmic reticulum that are exported to the cytosol to be destroyed and deglycosylate them, while it has no activity toward native proteins. Deglycosylation is a prerequisite for subsequent proteasome-mediated degradation of some, but not all, misfolded glycoproteins. The polypeptide is Peptide-N(4)-(N-acetyl-beta-glucosaminyl)asparagine amidase (PNG1) (Debaryomyces hansenii (strain ATCC 36239 / CBS 767 / BCRC 21394 / JCM 1990 / NBRC 0083 / IGC 2968) (Yeast)).